Consider the following 497-residue polypeptide: Probable zinc metalloprotease TRV_03476 (497 aa).

The signal sequence occupies residues 1 to 24 (MRFLISSLLSGLALLTSLHAFVLA). 2 N-linked (GlcNAc...) asparagine glycosylation sites follow: asparagine 100 and asparagine 121. The Zn(2+) site is built by histidine 171, aspartate 191, and glutamate 227. Asparagine 242 carries N-linked (GlcNAc...) asparagine glycosylation. Aspartate 254 serves as a coordination point for Zn(2+). Positions 411–497 (MPRNVRVNTN…ERGVAVLPFP (87 aa)) constitute a Fibronectin type-III domain. The N-linked (GlcNAc...) asparagine glycan is linked to asparagine 424.

It belongs to the peptidase M28 family. M28B subfamily. Requires Zn(2+) as cofactor.

It is found in the secreted. This is Probable zinc metalloprotease TRV_03476 from Trichophyton verrucosum (strain HKI 0517).